Consider the following 351-residue polypeptide: Nuclear inhibitor of protein phosphatase 1 (351 aa).

An interaction with CDC5L, SF3B1 and MELK region spans residues 1–142; the sequence is MAAAANSGSS…LPSAVKGDEK (142 aa). An FHA domain is found at 49 to 101; sequence YLFGRNPDLCDFTIDHQSCSRVHAALVYHKHLKRVFLIDLNSTHGTFLGHIRL. Residues 143–224 form an interaction with EED region; the sequence is MGGEDDELKG…VDPSVGRFRN (82 aa). A Phosphothreonine; by CK2; in vitro modification is found at T161. Position 178 is a phosphoserine; by PKA; in vitro (S178). 2 short sequence motifs (nuclear localization signal) span residues 185-209 and 210-240; these read GNLDIQRPKRKRKNSRVTFSEDDEI and INPEDVDPSVGRFRNMVQTAVVPVKKKRVEG. Residues 191 to 200 are involved in PP-1 inhibition; it reads RPKRKRKNSR. S199 is modified (phosphoserine). The involved in PP-1 binding stretch occupies residues 200-203; the sequence is RVTF. S204 carries the post-translational modification Phosphoserine. S249 carries the post-translational modification Phosphoserine. At Y264 the chain carries Phosphotyrosine. Residues 310–329 are interaction with EED; it reads AVNMNPAPNPAVYNPEAVNE. The disordered stretch occupies residues 316 to 351; the sequence is APNPAVYNPEAVNEPKKKKYAKEAWPGKKPTPSLLI. Residues 330 to 351 form an RNA-binding region; that stretch reads PKKKKYAKEAWPGKKPTPSLLI. The interval 331-337 is involved in PP-1 inhibition; sequence KKKKYAK. Y335 bears the Phosphotyrosine mark.

As to quaternary structure, interacts with phosphorylated CDC5L, SF3B1 and MELK. Interacts with EED. Part of a complex consisting of PPP1R8, EED, HDAC2 and PP-1. Part of the spliceosome. Interacts with PPP1CA, PPP1CB and PPP1CC. In terms of processing, the N-terminus is blocked. Inactivated by phosphorylation on Ser-199 or Ser-204.

It is found in the nucleus. The protein resides in the nucleus speckle. Inhibitor subunit of the major nuclear protein phosphatase-1 (PP-1). It has RNA-binding activity but does not cleave RNA and may target PP-1 to RNA-associated substrates. May also be involved in pre-mRNA splicing. Binds DNA and might act as a transcriptional repressor. Seems to be required for cell proliferation. The protein is Nuclear inhibitor of protein phosphatase 1 (PPP1R8) of Bos taurus (Bovine).